We begin with the raw amino-acid sequence, 574 residues long: Kelch-like protein 35 (574 aa).

The 71-residue stretch at 40-110 (TDVVLRAGGR…VYGAGVRLRA (71 aa)) folds into the BTB domain. Residues 146-248 (SLALRRVAAA…APAYFLEKVE (103 aa)) enclose the BACK domain. 6 Kelch repeats span residues 292 to 341 (VIVV…ALRN), 343 to 385 (IYVS…ALQG), 386 to 432 (QLFA…PCAG), 434 to 480 (LYVI…SLED), 481 to 522 (TIYV…VCDG), and 524 to 570 (VHIL…TIVQ).

The protein is Kelch-like protein 35 (Klhl35) of Mus musculus (Mouse).